The primary structure comprises 357 residues: Glutamine synthetase root isozyme 1 (357 aa).

In terms of domain architecture, GS beta-grasp spans 19–99 (IIAEYIWIGG…VMCDCYTPQG (81 aa)). Positions 106–357 (KRYSAAKVFS…AETTILWNGN (252 aa)) constitute a GS catalytic domain.

Belongs to the glutamine synthetase family. As to quaternary structure, homooctamer. As to expression, found mainly in the cortical tissues of seedling roots, and in the root tip.

The protein resides in the cytoplasm. It catalyses the reaction L-glutamate + NH4(+) + ATP = L-glutamine + ADP + phosphate + H(+). Plays a role in the flow of nitrogen into nitrogenous organic compounds. This chain is Glutamine synthetase root isozyme 1 (GLN6), found in Zea mays (Maize).